Here is a 209-residue protein sequence, read N- to C-terminus: Protein-L-isoaspartate O-methyltransferase (209 aa).

Serine 60 is a catalytic residue.

The protein belongs to the methyltransferase superfamily. L-isoaspartyl/D-aspartyl protein methyltransferase family.

The protein resides in the cytoplasm. The enzyme catalyses [protein]-L-isoaspartate + S-adenosyl-L-methionine = [protein]-L-isoaspartate alpha-methyl ester + S-adenosyl-L-homocysteine. Catalyzes the methyl esterification of L-isoaspartyl residues in peptides and proteins that result from spontaneous decomposition of normal L-aspartyl and L-asparaginyl residues. It plays a role in the repair and/or degradation of damaged proteins. The protein is Protein-L-isoaspartate O-methyltransferase of Methanococcus vannielii (strain ATCC 35089 / DSM 1224 / JCM 13029 / OCM 148 / SB).